We begin with the raw amino-acid sequence, 207 residues long: Octanoyltransferase (207 aa).

A BPL/LPL catalytic domain is found at 27–203 (ASTEDELWVV…HLETQFTPKA (177 aa)). Substrate contacts are provided by residues 66–73 (RGGQITYH), 133–135 (SLG), and 146–148 (GLA). Cys-164 acts as the Acyl-thioester intermediate in catalysis.

Belongs to the LipB family.

The protein localises to the cytoplasm. It catalyses the reaction octanoyl-[ACP] + L-lysyl-[protein] = N(6)-octanoyl-L-lysyl-[protein] + holo-[ACP] + H(+). It functions in the pathway protein modification; protein lipoylation via endogenous pathway; protein N(6)-(lipoyl)lysine from octanoyl-[acyl-carrier-protein]: step 1/2. Catalyzes the transfer of endogenously produced octanoic acid from octanoyl-acyl-carrier-protein onto the lipoyl domains of lipoate-dependent enzymes. Lipoyl-ACP can also act as a substrate although octanoyl-ACP is likely to be the physiological substrate. This Neisseria meningitidis serogroup C / serotype 2a (strain ATCC 700532 / DSM 15464 / FAM18) protein is Octanoyltransferase.